We begin with the raw amino-acid sequence, 396 residues long: L-lactate dehydrogenase (396 aa).

Residues 1 to 380 form the FMN hydroxy acid dehydrogenase domain; that stretch reads MIISAASDYR…TQDSLVQGLG (380 aa). Y24 provides a ligand contact to substrate. FMN-binding residues include S106 and Q127. Y129 contributes to the substrate binding site. T155 contacts FMN. R164 provides a ligand contact to substrate. K251 is a binding site for FMN. H275 serves as the catalytic Proton acceptor. R278 serves as a coordination point for substrate. 306-330 contributes to the FMN binding site; it reads DSGIRNGLDVVRMIALGADTVLLGR.

The protein belongs to the FMN-dependent alpha-hydroxy acid dehydrogenase family. The cofactor is FMN.

It is found in the cell inner membrane. The enzyme catalyses (S)-lactate + A = pyruvate + AH2. In terms of biological role, catalyzes the conversion of L-lactate to pyruvate. Is coupled to the respiratory chain. The polypeptide is L-lactate dehydrogenase (Shigella boydii serotype 4 (strain Sb227)).